The sequence spans 513 residues: Zinc finger CCCH-type with G patch domain-containing protein (513 aa).

The C3H1-type zinc finger occupies 155–178; that stretch reads PCSYYLEGECRFDETKCRFSHGAL. 2 stretches are compositionally biased toward acidic residues: residues 252-261 and 271-283; these read DQDEDDELSS and DSSDEAESDMDDL. The interval 252 to 283 is disordered; that stretch reads DQDEDDELSSEESNSSMNDDSSDEAESDMDDL. Residues 312 to 358 enclose the G-patch domain; it reads TRGIGSKLMEKMGYIHGTGLGSDGRGIVTPVSAQILPQGRSLDACME. Positions 455-467 are enriched in basic and acidic residues; that stretch reads DMAKVKQSLDRNS. Residues 455-513 form a disordered region; it reads DMAKVKQSLDRNSGDAQLQKRLQVQMESHKQELATLQAQERSLSKEQQTRKSKNKMFEF. The span at 468–480 shows a compositional bias: polar residues; the sequence is GDAQLQKRLQVQM. The segment covering 496-513 has biased composition (basic and acidic residues); sequence SLSKEQQTRKSKNKMFEF.

It is found in the nucleus. Transcription repressor. The protein is Zinc finger CCCH-type with G patch domain-containing protein of Drosophila yakuba (Fruit fly).